Reading from the N-terminus, the 498-residue chain is ATP synthase subunit beta, chloroplastic (498 aa).

The residue at position 6 (Thr6) is a Phosphothreonine. A Phosphoserine modification is found at Ser13. 172-179 (GGAGVGKT) contributes to the ATP binding site.

This sequence belongs to the ATPase alpha/beta chains family. As to quaternary structure, F-type ATPases have 2 components, CF(1) - the catalytic core - and CF(0) - the membrane proton channel. CF(1) has five subunits: alpha(3), beta(3), gamma(1), delta(1), epsilon(1). CF(0) has four main subunits: a(1), b(1), b'(1) and c(9-12).

It is found in the plastid. It localises to the chloroplast thylakoid membrane. It carries out the reaction ATP + H2O + 4 H(+)(in) = ADP + phosphate + 5 H(+)(out). Produces ATP from ADP in the presence of a proton gradient across the membrane. The catalytic sites are hosted primarily by the beta subunits. The chain is ATP synthase subunit beta, chloroplastic from Arabis hirsuta (Hairy rock-cress).